Reading from the N-terminus, the 510-residue chain is Cytochrome P450 90D2 (510 aa).

A helical membrane pass occupies residues 6 to 26 (MVGSGGVYSWPAALLVAAIVV). Residue Cys-444 participates in heme binding.

The protein belongs to the cytochrome P450 family. The cofactor is heme.

It is found in the membrane. It carries out the reaction 3-epi-6-deoxocathasterone + reduced [NADPH--hemoprotein reductase] + O2 = 6-deoxotyphasterol + oxidized [NADPH--hemoprotein reductase] + H2O + H(+). The enzyme catalyses (22S,24R)-22-hydroxy-5alpha-ergostan-3-one + reduced [NADPH--hemoprotein reductase] + O2 = 3-dehydro-6-deoxoteasterone + oxidized [NADPH--hemoprotein reductase] + H2O + H(+). The catalysed reaction is 6-deoxycathasterone + reduced [NADPH--hemoprotein reductase] + O2 = 6-deoxoteasterone + oxidized [NADPH--hemoprotein reductase] + H2O + H(+). The protein operates within plant hormone biosynthesis; brassinosteroid biosynthesis. Its function is as follows. Involved in reduction steps of the biosynthesis of plant campesterol-derivative steroids, ending to castasterone (CS) but missing brassinolide (BL). Catalyzes the conversion of (22S,24R)-22-hydroxy-5alpha-ergostan-3-one (22-hydroxy-campesta-3-one, 22-OH-3-one) to 3-dehydro-6-deoxoteasterone (6-deoxo3DT, 6-deoxo-3-DHT), 3-epi-6-deoxocathasterone (3-epi-6-deoxoCT) to 6-deoxotyphasterol (6-deoxoTY) and of 6-deoxocathasterone (6-deoxoCT) to 6-deoxoteasterone (6-deoxoTE). The chain is Cytochrome P450 90D2 from Brachypodium distachyon (Purple false brome).